The following is a 273-amino-acid chain: Urease accessory protein UreD (273 aa).

Belongs to the UreD family. As to quaternary structure, ureD, UreF and UreG form a complex that acts as a GTP-hydrolysis-dependent molecular chaperone, activating the urease apoprotein by helping to assemble the nickel containing metallocenter of UreC. The UreE protein probably delivers the nickel.

The protein localises to the cytoplasm. In terms of biological role, required for maturation of urease via the functional incorporation of the urease nickel metallocenter. This is Urease accessory protein UreD from Bacillus cereus (strain ATCC 10987 / NRS 248).